The following is a 294-amino-acid chain: 4-hydroxy-tetrahydrodipicolinate synthase (294 aa).

Threonine 45 contributes to the pyruvate binding site. Tyrosine 133 serves as the catalytic Proton donor/acceptor. The active-site Schiff-base intermediate with substrate is the lysine 161. Isoleucine 203 serves as a coordination point for pyruvate.

It belongs to the DapA family. As to quaternary structure, homotetramer; dimer of dimers.

The protein resides in the cytoplasm. The catalysed reaction is L-aspartate 4-semialdehyde + pyruvate = (2S,4S)-4-hydroxy-2,3,4,5-tetrahydrodipicolinate + H2O + H(+). The protein operates within amino-acid biosynthesis; L-lysine biosynthesis via DAP pathway; (S)-tetrahydrodipicolinate from L-aspartate: step 3/4. Functionally, catalyzes the condensation of (S)-aspartate-beta-semialdehyde [(S)-ASA] and pyruvate to 4-hydroxy-tetrahydrodipicolinate (HTPA). In Alcanivorax borkumensis (strain ATCC 700651 / DSM 11573 / NCIMB 13689 / SK2), this protein is 4-hydroxy-tetrahydrodipicolinate synthase.